The sequence spans 516 residues: Threonine synthase 2, chloroplastic (516 aa).

The transit peptide at 1-33 (MASFSLPHSATYFPSHSETSLKPHSAASFTVRC) directs the protein to the chloroplast. Residues 1-37 (MASFSLPHSATYFPSHSETSLKPHSAASFTVRCTSAS) show a composition bias toward polar residues. Residues 1 to 55 (MASFSLPHSATYFPSHSETSLKPHSAASFTVRCTSASPAVPPQTPQKPRRSPDEN) form a disordered region. S-adenosyl-L-methionine contacts are provided by residues 133–135 (PYG), 156–158 (SAF), N163, L164, K172, and N178. An N6-(pyridoxal phosphate)lysine modification is found at K194. Pyridoxal 5'-phosphate-binding positions include 326-330 (GNLGN) and T464.

The protein belongs to the threonine synthase family. As to quaternary structure, homodimer. The cofactor is pyridoxal 5'-phosphate.

The protein localises to the plastid. It is found in the chloroplast. The catalysed reaction is O-phospho-L-homoserine + H2O = L-threonine + phosphate. Its pathway is amino-acid biosynthesis; L-threonine biosynthesis; L-threonine from L-aspartate: step 5/5. With respect to regulation, allosterically activated by S-adenosyl-methionine (SAM). In terms of biological role, catalyzes the gamma-elimination of phosphate from L-phosphohomoserine and the beta-addition of water to produce L-threonine. The protein is Threonine synthase 2, chloroplastic (TS2) of Arabidopsis thaliana (Mouse-ear cress).